The sequence spans 431 residues: Glutamate-1-semialdehyde 2,1-aminomutase (431 aa).

Position 267 is an N6-(pyridoxal phosphate)lysine (Lys267).

Belongs to the class-III pyridoxal-phosphate-dependent aminotransferase family. HemL subfamily. As to quaternary structure, homodimer. Requires pyridoxal 5'-phosphate as cofactor.

It localises to the cytoplasm. The catalysed reaction is (S)-4-amino-5-oxopentanoate = 5-aminolevulinate. The protein operates within porphyrin-containing compound metabolism; protoporphyrin-IX biosynthesis; 5-aminolevulinate from L-glutamyl-tRNA(Glu): step 2/2. This chain is Glutamate-1-semialdehyde 2,1-aminomutase, found in Syntrophomonas wolfei subsp. wolfei (strain DSM 2245B / Goettingen).